The following is a 540-amino-acid chain: Isocitrate lyase (540 aa).

103–105 provides a ligand contact to substrate; sequence SGW. Asp-187 serves as a coordination point for Mg(2+). The active-site Proton acceptor is the Cys-225. Substrate contacts are provided by residues 226 to 227, 385 to 389, and Thr-458; these read GH and NNSPS.

Belongs to the isocitrate lyase/PEP mutase superfamily. Isocitrate lyase family. As to quaternary structure, homotetramer. The cofactor is Mg(2+).

The enzyme catalyses D-threo-isocitrate = glyoxylate + succinate. It functions in the pathway carbohydrate metabolism; glyoxylate cycle; (S)-malate from isocitrate: step 1/2. It participates in one-carbon metabolism; formaldehyde assimilation via serine pathway. In the presence of magnesium, inhibited by oxalate, potassium cyanide, manganese, silver, cadmium and to a lesser extent by succinate, glycolate, iodoacetamide, DL-penicillamine, aluminum, sodium, potassium, lithium and strontium. Its function is as follows. Involved in the metabolic adaptation in response to environmental changes. Catalyzes the reversible formation of succinate and glyoxylate from isocitrate, a key step of the glyoxylate cycle, which operates as an anaplerotic route for replenishing the tricarboxylic acid cycle during growth on fatty acid substrates. May be involved in the assimilation of one-carbon compounds via the isocitrate lyase-positive serine pathway. This chain is Isocitrate lyase, found in Hyphomicrobium methylovorum.